Here is a 348-residue protein sequence, read N- to C-terminus: MGYELFGLPMIYYISMVAKVLVVFVFVLLTVAYATYAERKIIGHMQVRLGPMRTGWHGLLQPIADGLKLFFKEEIVPSQADKFAFLIAPIIALVPAFIGFAVIPFGETIEVAGYKIPLQIAGYYDTVSGQVVDMNVGVLYILALASIGVYGIVLAGWSSNSKYSLLGGLRSSAQMISYELAAGLAIISVFMLSESLSLQKIVADQANGAWYCFKQPLAFILFFICSLAEINRTPFDLPEAETELVSGFCTEYSSMKYAMFFMAEYANMVTVCAVTTTLFLGGWHGPAFLPGWAWFIAKVYFLIFVCMWIRATYPRYRYDQLMRLGWKVFLPLTLVNIIVTGIVVSLQS.

The next 8 membrane-spanning stretches (helical) occupy residues 11–31 (IYYI…LLTV), 83–103 (FAFL…FAVI), 136–156 (VGVL…VLAG), 172–192 (SAQM…VFML), 208–228 (GAWY…CSLA), 268–288 (MVTV…GPAF), 289–309 (LPGW…CMWI), and 324–344 (LGWK…GIVV).

The protein belongs to the complex I subunit 1 family. In terms of assembly, NDH-1 is composed of 14 different subunits. Subunits NuoA, H, J, K, L, M, N constitute the membrane sector of the complex.

The protein localises to the cell inner membrane. The catalysed reaction is a quinone + NADH + 5 H(+)(in) = a quinol + NAD(+) + 4 H(+)(out). Its function is as follows. NDH-1 shuttles electrons from NADH, via FMN and iron-sulfur (Fe-S) centers, to quinones in the respiratory chain. The immediate electron acceptor for the enzyme in this species is believed to be ubiquinone. Couples the redox reaction to proton translocation (for every two electrons transferred, four hydrogen ions are translocated across the cytoplasmic membrane), and thus conserves the redox energy in a proton gradient. This subunit may bind ubiquinone. In Geobacter sulfurreducens (strain ATCC 51573 / DSM 12127 / PCA), this protein is NADH-quinone oxidoreductase subunit H 1.